We begin with the raw amino-acid sequence, 173 residues long: Dual-action ribosomal maturation protein DarP (173 aa).

It belongs to the DarP family.

It is found in the cytoplasm. In terms of biological role, member of a network of 50S ribosomal subunit biogenesis factors which assembles along the 30S-50S interface, preventing incorrect 23S rRNA structures from forming. Promotes peptidyl transferase center (PTC) maturation. The sequence is that of Dual-action ribosomal maturation protein DarP from Pseudomonas fluorescens (strain ATCC BAA-477 / NRRL B-23932 / Pf-5).